Consider the following 200-residue polypeptide: Holliday junction branch migration complex subunit RuvA (200 aa).

Positions 1–64 (MFAYFRGKLT…EDLLQLYGFS (64 aa)) are domain I. A domain II region spans residues 65 to 143 (GEEERQLFRL…KLSPVSALAS (79 aa)). Residues 144-154 (PARLSSTLLRD) form a flexible linker region. A domain III region spans residues 154–200 (DDAVNALVTLGFSRIIVQKAVVAILEQNPGLTVEEVIKAALVSIHNS).

The protein belongs to the RuvA family. In terms of assembly, homotetramer. Forms an RuvA(8)-RuvB(12)-Holliday junction (HJ) complex. HJ DNA is sandwiched between 2 RuvA tetramers; dsDNA enters through RuvA and exits via RuvB. An RuvB hexamer assembles on each DNA strand where it exits the tetramer. Each RuvB hexamer is contacted by two RuvA subunits (via domain III) on 2 adjacent RuvB subunits; this complex drives branch migration. In the full resolvosome a probable DNA-RuvA(4)-RuvB(12)-RuvC(2) complex forms which resolves the HJ.

Its subcellular location is the cytoplasm. In terms of biological role, the RuvA-RuvB-RuvC complex processes Holliday junction (HJ) DNA during genetic recombination and DNA repair, while the RuvA-RuvB complex plays an important role in the rescue of blocked DNA replication forks via replication fork reversal (RFR). RuvA specifically binds to HJ cruciform DNA, conferring on it an open structure. The RuvB hexamer acts as an ATP-dependent pump, pulling dsDNA into and through the RuvAB complex. HJ branch migration allows RuvC to scan DNA until it finds its consensus sequence, where it cleaves and resolves the cruciform DNA. The polypeptide is Holliday junction branch migration complex subunit RuvA (Pelodictyon phaeoclathratiforme (strain DSM 5477 / BU-1)).